The sequence spans 159 residues: Small ribosomal subunit protein uS7m (159 aa).

It belongs to the universal ribosomal protein uS7 family. In terms of assembly, part of the small ribosomal subunit.

It is found in the mitochondrion. Functionally, one of the primary rRNA binding proteins, it binds directly to the small rRNA where it nucleates assembly of the head domain of the small subunit. This is Small ribosomal subunit protein uS7m (RPS7) from Reclinomonas americana.